Consider the following 351-residue polypeptide: LIM/homeobox protein ceh-14 (351 aa).

2 consecutive LIM zinc-binding domains span residues Ala-46–Thr-105 and Thr-105–Lys-169. Residues Asn-180–Lys-239 constitute a DNA-binding region (homeobox). The span at Leu-238 to Ser-254 shows a compositional bias: basic and acidic residues. The segment at Leu-238–Pro-268 is disordered. Positions Asp-255 to Pro-268 are enriched in polar residues.

Interacts (via LIM zinc-binding domains 1 and 2) with lim-7 (via LID domain). May interact with itself. May interact with homeobox protein ceh-63. Expressed in the anterior AFDL/R sensory neurons and BDUL/R and ALA interneurons, and in PVT, PVQL/R, DVC, PVNL/R, PVWL/R, PVR, PHCL/R, PHAL/R and PHBL/R cells in the tail region.

It is found in the nucleus. Functionally, probable transcription factor, modulating expression of helix-loop-helix protein mbr-1 and homeobox protein ceh-63, perhaps acting in concert with ceh-63. Binds to a motif including the sequence 5'-CTAAT-3' in regulatory promoter elements. Confers thermosensory function to neurons. Required for correct AFD-mediated thermotaxis. In concert with homeobox protein ttx-1, perhaps as components in a complex, specifies identity of AFD neurons, acting by synergistically regulating receptor-type guanylyl cyclase gcy-8, gcy-18 and other genes. Involved in postembryonic differentiation of the ALA neuron, and regulation of genes that contribute to behavioral quiescence, a sleep-like behavior mediated by ALA. Regulates its own expression and also that of homeodomain ceh-17, together forming an autoregulatory loop in the ALA neuron. Required for initial pathfinding of the ALA axons, but largely dispensable for axon migration. Involved in regulating postembryonic axon maintenance in the ventral nerve cord, acting in concert with LIM homeobox protein lim-6, via modulation of expression of immunoglobulin domain zig genes in the interneuron PVT. Plays a role in controlling the peptidergic identity of the BDU neurons, regulating expression of flp-10, nlp-1, and nlp-15, thereby modulating the harsh touch response. In Caenorhabditis elegans, this protein is LIM/homeobox protein ceh-14 (ceh-14).